The following is a 466-amino-acid chain: Proline--tRNA ligase (466 aa).

It belongs to the class-II aminoacyl-tRNA synthetase family. ProS type 3 subfamily. In terms of assembly, homodimer.

It localises to the cytoplasm. The enzyme catalyses tRNA(Pro) + L-proline + ATP = L-prolyl-tRNA(Pro) + AMP + diphosphate. Catalyzes the attachment of proline to tRNA(Pro) in a two-step reaction: proline is first activated by ATP to form Pro-AMP and then transferred to the acceptor end of tRNA(Pro). The chain is Proline--tRNA ligase from Picrophilus torridus (strain ATCC 700027 / DSM 9790 / JCM 10055 / NBRC 100828 / KAW 2/3).